Here is a 535-residue protein sequence, read N- to C-terminus: Alcohol O-acetyltransferase 2 (535 aa).

The segment at 19–36 (GHARRMGHLENYFAVLSR) is membrane association. Catalysis depends on charge relay system residues His-189 and Asp-193. Residues 515-532 (RGEWESFCKLFYQTIGEF) form a membrane association region.

Belongs to the ATF1 alcohol acetyltransferase family.

It is found in the lipid droplet. The protein resides in the endoplasmic reticulum membrane. It catalyses the reaction an aliphatic alcohol + acetyl-CoA = an acetyl ester + CoA. Functionally, can use acetyl-CoA to synthesize acetate esters from various alcohols, producing ethyl acetate, isoamyl acetate, isobutyl acetate, butyl acetate, hexyl acetate, heptyl acetate and octyl acetate. ATF2 seems to play only a minor role in the acetate ester synthesis, compared to ATF1. Plays an active role in the detoxification hydroxysteroids and possibly certain phytochemicals, in association with the efflux pumps PDR5 and SNQ2. The protein is Alcohol O-acetyltransferase 2 of Saccharomyces cerevisiae (strain ATCC 204508 / S288c) (Baker's yeast).